The primary structure comprises 262 residues: Tropinone reductase homolog At2g29290 (262 aa).

Residue 13–37 (LVTGGTKGIGEAVVEELSILGARVH) coordinates NADP(+). Ser-146 lines the substrate pocket. Tyr-159 functions as the Proton acceptor in the catalytic mechanism.

Belongs to the short-chain dehydrogenases/reductases (SDR) family. SDR65C subfamily.

This chain is Tropinone reductase homolog At2g29290, found in Arabidopsis thaliana (Mouse-ear cress).